We begin with the raw amino-acid sequence, 601 residues long: Glutathione-regulated potassium-efflux system protein KefB (601 aa).

A run of 13 helical transmembrane segments spans residues 4–24, 29–49, 55–75, 87–107, 115–135, 152–172, 177–197, 207–227, 230–250, 262–282, 284–304, 324–344, and 356–376; these read SDFL…VPLA, IGAV…GLGF, EILH…GLEL, IFGV…GLLM, AAVV…LQLM, VLLF…LLAG, HFDW…LIGG, FIAA…LVLG, LFMD…GVLL, AIDP…GMSL, LGVL…LVAV, MQFA…FSTA, and ALLL…MKLV. One can recognise an RCK N-terminal domain in the interval 400–519; sequence KPQVIVVGFG…AGVTQFSRET (120 aa).

This sequence belongs to the monovalent cation:proton antiporter 2 (CPA2) transporter (TC 2.A.37) family. KefB subfamily. In terms of assembly, interacts with the regulatory subunit KefG.

It is found in the cell inner membrane. Pore-forming subunit of a potassium efflux system that confers protection against electrophiles. Catalyzes K(+)/H(+) antiport. In Shigella boydii serotype 18 (strain CDC 3083-94 / BS512), this protein is Glutathione-regulated potassium-efflux system protein KefB.